The primary structure comprises 438 residues: Putative F-box/FBD/LRR-repeat protein At2g05300 (438 aa).

The F-box domain occupies 13-59; that stretch reads EDRISQLPDPLLTQILNLLPTEEAVKTSVLSTRWRTLWLWVPNLELS. LRR repeat units follow at residues 135–166, 167–192, 235–261, and 318–346; these read CDSL…RLKD, IVFH…KIDV, CLII…DISL, and YVTL…ILER. An FBD domain is found at 362–409; that stretch reads SMSSVPECLLTSLEFVEFKAPICGLGPEMMLVWYFLKNSPTLKKLTLP.

This Arabidopsis thaliana (Mouse-ear cress) protein is Putative F-box/FBD/LRR-repeat protein At2g05300.